A 122-amino-acid polypeptide reads, in one-letter code: uncharacterized protein (122 aa).

Residues 79–90 (NERVTSRVTNSR) show a composition bias toward polar residues. The tract at residues 79–122 (NERVTSRVTNSRTESESNGNGNATGNTSSNANSNGNANGIYIRK) is disordered. Over residues 94 to 122 (ESNGNGNATGNTSSNANSNGNANGIYIRK) the composition is skewed to low complexity.

This is an uncharacterized protein from Leptolyngbya boryana (Plectonema boryanum).